Here is a 309-residue protein sequence, read N- to C-terminus: Homoserine kinase (309 aa).

91 to 101 (PIGSGLGSSAC) contacts ATP.

Belongs to the GHMP kinase family. Homoserine kinase subfamily.

The protein localises to the cytoplasm. It catalyses the reaction L-homoserine + ATP = O-phospho-L-homoserine + ADP + H(+). It functions in the pathway amino-acid biosynthesis; L-threonine biosynthesis; L-threonine from L-aspartate: step 4/5. In terms of biological role, catalyzes the ATP-dependent phosphorylation of L-homoserine to L-homoserine phosphate. The chain is Homoserine kinase from Yersinia pseudotuberculosis serotype O:1b (strain IP 31758).